Reading from the N-terminus, the 238-residue chain is Ribonuclease PH (238 aa).

Phosphate is bound by residues Arg86 and Gly124–Arg126.

This sequence belongs to the RNase PH family. In terms of assembly, homohexameric ring arranged as a trimer of dimers.

The enzyme catalyses tRNA(n+1) + phosphate = tRNA(n) + a ribonucleoside 5'-diphosphate. Its function is as follows. Phosphorolytic 3'-5' exoribonuclease that plays an important role in tRNA 3'-end maturation. Removes nucleotide residues following the 3'-CCA terminus of tRNAs; can also add nucleotides to the ends of RNA molecules by using nucleoside diphosphates as substrates, but this may not be physiologically important. Probably plays a role in initiation of 16S rRNA degradation (leading to ribosome degradation) during starvation. The polypeptide is Ribonuclease PH (Escherichia coli O6:K15:H31 (strain 536 / UPEC)).